The chain runs to 239 residues: UPF0173 metal-dependent hydrolase Msm_0779 (239 aa).

This sequence belongs to the UPF0173 family.

In Methanobrevibacter smithii (strain ATCC 35061 / DSM 861 / OCM 144 / PS), this protein is UPF0173 metal-dependent hydrolase Msm_0779.